Here is a 728-residue protein sequence, read N- to C-terminus: Phosphoribosylformylglycinamidine synthase subunit PurL (728 aa).

Residue H42 is part of the active site. Residues Y45 and K84 each coordinate ATP. Residue E86 coordinates Mg(2+). Residues 87–90 (SHNH) and R109 contribute to the substrate site. H88 functions as the Proton acceptor in the catalytic mechanism. D110 is a Mg(2+) binding site. Q237 contributes to the substrate binding site. Mg(2+) is bound at residue D265. 309-311 (ESQ) is a binding site for substrate. The ATP site is built by D491 and G528. N529 is a Mg(2+) binding site. S531 is a substrate binding site.

The protein belongs to the FGAMS family. In terms of assembly, monomer. Part of the FGAM synthase complex composed of 1 PurL, 1 PurQ and 2 PurS subunits.

The protein resides in the cytoplasm. It carries out the reaction N(2)-formyl-N(1)-(5-phospho-beta-D-ribosyl)glycinamide + L-glutamine + ATP + H2O = 2-formamido-N(1)-(5-O-phospho-beta-D-ribosyl)acetamidine + L-glutamate + ADP + phosphate + H(+). The protein operates within purine metabolism; IMP biosynthesis via de novo pathway; 5-amino-1-(5-phospho-D-ribosyl)imidazole from N(2)-formyl-N(1)-(5-phospho-D-ribosyl)glycinamide: step 1/2. Functionally, part of the phosphoribosylformylglycinamidine synthase complex involved in the purines biosynthetic pathway. Catalyzes the ATP-dependent conversion of formylglycinamide ribonucleotide (FGAR) and glutamine to yield formylglycinamidine ribonucleotide (FGAM) and glutamate. The FGAM synthase complex is composed of three subunits. PurQ produces an ammonia molecule by converting glutamine to glutamate. PurL transfers the ammonia molecule to FGAR to form FGAM in an ATP-dependent manner. PurS interacts with PurQ and PurL and is thought to assist in the transfer of the ammonia molecule from PurQ to PurL. The protein is Phosphoribosylformylglycinamidine synthase subunit PurL of Campylobacter jejuni subsp. jejuni serotype O:23/36 (strain 81-176).